The chain runs to 382 residues: Glutamyl-tRNA reductase (382 aa).

Substrate-binding positions include 38–41 (TCNR), S85, 90–92 (ENQ), and Q96. The Nucleophile role is filled by C39. Residue 164–169 (GAGEMG) participates in NADP(+) binding.

Belongs to the glutamyl-tRNA reductase family. As to quaternary structure, homodimer.

The catalysed reaction is (S)-4-amino-5-oxopentanoate + tRNA(Glu) + NADP(+) = L-glutamyl-tRNA(Glu) + NADPH + H(+). The protein operates within porphyrin-containing compound metabolism; protoporphyrin-IX biosynthesis; 5-aminolevulinate from L-glutamyl-tRNA(Glu): step 1/2. In terms of biological role, catalyzes the NADPH-dependent reduction of glutamyl-tRNA(Glu) to glutamate 1-semialdehyde (GSA). This chain is Glutamyl-tRNA reductase, found in Methanococcus maripaludis (strain C5 / ATCC BAA-1333).